The primary structure comprises 168 residues: Disulfide bond formation protein B 2 (168 aa).

Over 1–14 the chain is Cytoplasmic; the sequence is MSAPIGATRAERWT. Residues 15–31 traverse the membrane as a helical segment; sequence LLAIGVASFELVAGALW. Topologically, residues 32–49 are periplasmic; that stretch reads IQLAWQEDPCPLCIIQRY. C41 and C44 are joined by a disulfide. Residues 50-64 traverse the membrane as a helical segment; it reads LFLLIALFTFVAAAG. At 65-69 the chain is on the cytoplasmic side; it reads GRRVA. A helical transmembrane segment spans residues 70-87; the sequence is LLRVLSLTTALAGAAVAV. At 88–142 the chain is on the periplasmic side; the sequence is RHIYVQAHPGFSCGFDALQPVIDSLPPAHWLPPVFKVGGLCETLYPPILGLSLPM. C100 and C128 form a disulfide bridge. A helical membrane pass occupies residues 143–161; the sequence is WALVGFSAIAVALGWRIRA. Residues 162-168 are Cytoplasmic-facing; sequence QAVIRTA.

The protein belongs to the DsbB family.

Its subcellular location is the cell inner membrane. In terms of biological role, required for disulfide bond formation in some periplasmic proteins. Acts by oxidizing the DsbA protein. This is Disulfide bond formation protein B 2 from Burkholderia lata (strain ATCC 17760 / DSM 23089 / LMG 22485 / NCIMB 9086 / R18194 / 383).